A 167-amino-acid polypeptide reads, in one-letter code: Ribosome maturation factor RimM (167 aa).

The PRC barrel domain occupies 94–165; sequence ENEYYYSDII…KIIITPMEGL (72 aa).

This sequence belongs to the RimM family. Binds ribosomal protein uS19.

The protein resides in the cytoplasm. Functionally, an accessory protein needed during the final step in the assembly of 30S ribosomal subunit, possibly for assembly of the head region. Essential for efficient processing of 16S rRNA. May be needed both before and after RbfA during the maturation of 16S rRNA. It has affinity for free ribosomal 30S subunits but not for 70S ribosomes. This chain is Ribosome maturation factor RimM, found in Staphylococcus aureus (strain bovine RF122 / ET3-1).